Consider the following 109-residue polypeptide: MMPMNPKQLKKLMKQLDMKQLDGVKEVIIKLENKEIVIKEPVVTVIRAMGEKMYQIAGGTEEERVVLKISEEDIKLVMEQAGVDYETAKKALEEAGGDLAEAILRLTDQ.

Positions 3–69 constitute an NAC-A/B domain; that stretch reads PMNPKQLKKL…TEEERVVLKI (67 aa).

Belongs to the NAC-alpha family. As to quaternary structure, homodimer. Interacts with the ribosome. Binds ribosomal RNA.

In terms of biological role, contacts the emerging nascent chain on the ribosome. The protein is Nascent polypeptide-associated complex protein of Pyrococcus abyssi (strain GE5 / Orsay).